The sequence spans 501 residues: Cytochrome P450 2J6 (501 aa).

C447 is a heme binding site.

Belongs to the cytochrome P450 family. Heme serves as cofactor.

The protein localises to the endoplasmic reticulum membrane. It localises to the microsome membrane. It carries out the reaction an organic molecule + reduced [NADPH--hemoprotein reductase] + O2 = an alcohol + oxidized [NADPH--hemoprotein reductase] + H2O + H(+). The sequence is that of Cytochrome P450 2J6 (Cyp2j6) from Mus musculus (Mouse).